A 691-amino-acid polypeptide reads, in one-letter code: Elongation factor G (691 aa).

One can recognise a tr-type G domain in the interval E8–I282. GTP is bound by residues A17 to T24, D81 to H85, and N135 to D138.

This sequence belongs to the TRAFAC class translation factor GTPase superfamily. Classic translation factor GTPase family. EF-G/EF-2 subfamily.

It is found in the cytoplasm. Catalyzes the GTP-dependent ribosomal translocation step during translation elongation. During this step, the ribosome changes from the pre-translocational (PRE) to the post-translocational (POST) state as the newly formed A-site-bound peptidyl-tRNA and P-site-bound deacylated tRNA move to the P and E sites, respectively. Catalyzes the coordinated movement of the two tRNA molecules, the mRNA and conformational changes in the ribosome. The protein is Elongation factor G of Thermosynechococcus vestitus (strain NIES-2133 / IAM M-273 / BP-1).